We begin with the raw amino-acid sequence, 249 residues long: Pleckstrin homology domain-containing family F member 2 (249 aa).

A Phosphoserine modification is found at serine 16. Residues 35–131 (VLIGEGVLTK…WMNHINKCVT (97 aa)) enclose the PH domain. Lysine 44 carries the N6-acetyllysine modification. The FYVE-type zinc finger occupies 152–212 (DSEATVCMRC…ICDFCYDLLS (61 aa)). Zn(2+)-binding residues include cysteine 158, cysteine 161, cysteine 175, cysteine 178, cysteine 183, cysteine 186, cysteine 204, and cysteine 207. Residues 221-233 (PARSDSYSQSLKS) are compositionally biased toward polar residues. The interval 221-249 (PARSDSYSQSLKSPLNDMSDDDDDDDSSD) is disordered. The span at 238–249 (MSDDDDDDDSSD) shows a compositional bias: acidic residues. Serine 239 and serine 248 each carry phosphoserine.

May interact with EEA1. As to expression, expressed in placenta, ovary and small intestine, as well as in heart and pancreas. Also expressed in peripheral blood mononuclear cells and dendritic cells.

Its subcellular location is the early endosome membrane. It localises to the endoplasmic reticulum. Its function is as follows. May play a role in early endosome fusion upstream of RAB5, hence regulating receptor trafficking and fluid-phase transport. Enhances cellular sensitivity to TNF-induced apoptosis. This Homo sapiens (Human) protein is Pleckstrin homology domain-containing family F member 2 (PLEKHF2).